Consider the following 529-residue polypeptide: Peptide chain release factor 3 (529 aa).

The 270-residue stretch at 11 to 280 folds into the tr-type G domain; sequence SKRRTFAIIS…GLTEWAPAPK (270 aa). GTP is bound by residues 20–27, 88–92, and 142–145; these read SHPDAGKT, DTPGH, and NKLD.

The protein belongs to the TRAFAC class translation factor GTPase superfamily. Classic translation factor GTPase family. PrfC subfamily.

It is found in the cytoplasm. Increases the formation of ribosomal termination complexes and stimulates activities of RF-1 and RF-2. It binds guanine nucleotides and has strong preference for UGA stop codons. It may interact directly with the ribosome. The stimulation of RF-1 and RF-2 is significantly reduced by GTP and GDP, but not by GMP. This chain is Peptide chain release factor 3, found in Vibrio parahaemolyticus serotype O3:K6 (strain RIMD 2210633).